The chain runs to 312 residues: Methionyl-tRNA formyltransferase (312 aa).

109–112 (SLLP) lines the (6S)-5,6,7,8-tetrahydrofolate pocket.

This sequence belongs to the Fmt family.

The catalysed reaction is L-methionyl-tRNA(fMet) + (6R)-10-formyltetrahydrofolate = N-formyl-L-methionyl-tRNA(fMet) + (6S)-5,6,7,8-tetrahydrofolate + H(+). Attaches a formyl group to the free amino group of methionyl-tRNA(fMet). The formyl group appears to play a dual role in the initiator identity of N-formylmethionyl-tRNA by promoting its recognition by IF2 and preventing the misappropriation of this tRNA by the elongation apparatus. This is Methionyl-tRNA formyltransferase from Geotalea daltonii (strain DSM 22248 / JCM 15807 / FRC-32) (Geobacter daltonii).